Here is a 224-residue protein sequence, read N- to C-terminus: Phosphoribosylformylglycinamidine synthase subunit PurQ (224 aa).

Residues 2–224 form the Glutamine amidotransferase type-1 domain; sequence KVTILQFPGT…IKMLQGFLRA (223 aa). Residue Cys-86 is the Nucleophile of the active site. Active-site residues include His-200 and Glu-202.

As to quaternary structure, part of the FGAM synthase complex composed of 1 PurL, 1 PurQ and 2 PurS subunits.

The protein resides in the cytoplasm. It catalyses the reaction N(2)-formyl-N(1)-(5-phospho-beta-D-ribosyl)glycinamide + L-glutamine + ATP + H2O = 2-formamido-N(1)-(5-O-phospho-beta-D-ribosyl)acetamidine + L-glutamate + ADP + phosphate + H(+). The catalysed reaction is L-glutamine + H2O = L-glutamate + NH4(+). It functions in the pathway purine metabolism; IMP biosynthesis via de novo pathway; 5-amino-1-(5-phospho-D-ribosyl)imidazole from N(2)-formyl-N(1)-(5-phospho-D-ribosyl)glycinamide: step 1/2. Part of the phosphoribosylformylglycinamidine synthase complex involved in the purines biosynthetic pathway. Catalyzes the ATP-dependent conversion of formylglycinamide ribonucleotide (FGAR) and glutamine to yield formylglycinamidine ribonucleotide (FGAM) and glutamate. The FGAM synthase complex is composed of three subunits. PurQ produces an ammonia molecule by converting glutamine to glutamate. PurL transfers the ammonia molecule to FGAR to form FGAM in an ATP-dependent manner. PurS interacts with PurQ and PurL and is thought to assist in the transfer of the ammonia molecule from PurQ to PurL. The protein is Phosphoribosylformylglycinamidine synthase subunit PurQ of Sulfurimonas denitrificans (strain ATCC 33889 / DSM 1251) (Thiomicrospira denitrificans (strain ATCC 33889 / DSM 1251)).